Reading from the N-terminus, the 544-residue chain is Probable protein kinase UbiB (544 aa).

Positions 123–504 constitute a Protein kinase domain; that stretch reads DFDENALASA…QRWQKKMFVL (382 aa). ATP is bound by residues 129–137 and K155; that span reads LASASIAQV. Residue D290 is the Proton acceptor of the active site. Helical transmembrane passes span 501 to 521 and 523 to 543; these read MFVLIVGIVIFSVTLWQFAAL and LAISAGLFLVGFLVWLIGFLL.

This sequence belongs to the ABC1 family. UbiB subfamily.

The protein localises to the cell inner membrane. The protein operates within cofactor biosynthesis; ubiquinone biosynthesis [regulation]. Its function is as follows. Is probably a protein kinase regulator of UbiI activity which is involved in aerobic coenzyme Q (ubiquinone) biosynthesis. This chain is Probable protein kinase UbiB, found in Histophilus somni (strain 129Pt) (Haemophilus somnus).